Reading from the N-terminus, the 145-residue chain is Transcriptional regulator ZitR (145 aa).

The region spanning 1–142 (MSLANQIDQF…ISQFLSVLTE (142 aa)) is the HTH marR-type domain. Glu23, Cys29, Glu40, and His41 together coordinate Zn(2+). The segment at residues 53–76 (NARIAEQLKISPAAVTKALKKLQE) is a DNA-binding region (H-T-H motif). The Zn(2+) site is built by Glu106, His107, and His111.

As to quaternary structure, homodimer.

Zinc acts as a corepressor and is required for DNA-binding activity. Binds up to two zinc ligands per monomer. Inactive under zinc deprivation. In terms of biological role, zinc-responsive regulator that represses expression of the zit operon in the presence of zinc. Acts by binding two palindromic operator sites overlapping the -35 and -10 boxes of the zit promoter. Could be a sensitive sensor of intracellular zinc to efficiently respond to zinc variations in the environment. The protein is Transcriptional regulator ZitR (zitR) of Lactococcus lactis subsp. cremoris (strain MG1363).